A 298-amino-acid polypeptide reads, in one-letter code: Glutamyl-Q tRNA(Asp) synthetase (298 aa).

Residues 8 to 12 and Glu-44 contribute to the L-glutamate site; that span reads RFAPS. Positions 11–21 match the 'HIGH' region motif; the sequence is PSPTGPLHFGS. Zn(2+) contacts are provided by Cys-100, Cys-102, Tyr-123, and Cys-127. Positions 183 and 201 each coordinate L-glutamate. Positions 239–243 match the 'KMSKS' region motif; it reads KLSKQ. Lys-242 serves as a coordination point for ATP.

This sequence belongs to the class-I aminoacyl-tRNA synthetase family. GluQ subfamily. The cofactor is Zn(2+).

Catalyzes the tRNA-independent activation of glutamate in presence of ATP and the subsequent transfer of glutamate onto a tRNA(Asp). Glutamate is transferred on the 2-amino-5-(4,5-dihydroxy-2-cyclopenten-1-yl) moiety of the queuosine in the wobble position of the QUC anticodon. The chain is Glutamyl-Q tRNA(Asp) synthetase from Burkholderia orbicola (strain MC0-3).